The sequence spans 170 residues: Peptide deformylase (170 aa).

Fe cation-binding residues include Cys-91 and His-133. The active site involves Glu-134. His-137 provides a ligand contact to Fe cation.

Belongs to the polypeptide deformylase family. It depends on Fe(2+) as a cofactor.

The catalysed reaction is N-terminal N-formyl-L-methionyl-[peptide] + H2O = N-terminal L-methionyl-[peptide] + formate. Removes the formyl group from the N-terminal Met of newly synthesized proteins. Requires at least a dipeptide for an efficient rate of reaction. N-terminal L-methionine is a prerequisite for activity but the enzyme has broad specificity at other positions. This is Peptide deformylase from Aliivibrio fischeri (strain ATCC 700601 / ES114) (Vibrio fischeri).